A 607-amino-acid polypeptide reads, in one-letter code: Kelch repeat and BTB domain-containing protein 3 (607 aa).

Residues 48-115 enclose the BTB domain; it reads YDFKIIMKEE…AYTGKTRITD (68 aa). The region spanning 150 to 250 is the BACK domain; sequence CLHLLSLSDS…QLSEDTLQDY (101 aa). Kelch repeat units lie at residues 291–337, 339–390, 400–450, 452–502, and 548–595; these read KYIF…SSYG, KIFL…TPRT, RLFV…ACQN, IYVL…KAVP, and KIYI…VIQF.

This chain is Kelch repeat and BTB domain-containing protein 3, found in Mus musculus (Mouse).